The primary structure comprises 190 residues: GTP cyclohydrolase 1 (190 aa).

Zn(2+) contacts are provided by Cys-78, His-81, and Cys-150.

The protein belongs to the GTP cyclohydrolase I family. Toroid-shaped homodecamer, composed of two pentamers of five dimers.

The catalysed reaction is GTP + H2O = 7,8-dihydroneopterin 3'-triphosphate + formate + H(+). Its pathway is cofactor biosynthesis; 7,8-dihydroneopterin triphosphate biosynthesis; 7,8-dihydroneopterin triphosphate from GTP: step 1/1. Its activity is regulated as follows. K(+) ions moderately increases the Vmax, whereas UTP and Ca(2+) and Mg(2+) ions drastically increase the Km for GTP. The polypeptide is GTP cyclohydrolase 1 (folE) (Bacillus subtilis (strain 168)).